Here is a 303-residue protein sequence, read N- to C-terminus: Probable cell division protein WhiA (303 aa).

The segment at residues 272 to 303 (SIQQVADALEFPITKSGVNHRLRKINKIADDL) is a DNA-binding region (H-T-H motif).

It belongs to the WhiA family.

Its function is as follows. Involved in cell division and chromosome segregation. This Streptococcus pyogenes serotype M1 protein is Probable cell division protein WhiA.